A 950-amino-acid polypeptide reads, in one-letter code: F-box only protein 10 (950 aa).

The F-box domain occupies Met1–Leu48. 2 PbH1 repeats span residues Ser198–Gly217 and Val238–Gly260. The disordered stretch occupies residues Ile313–Glu364. The segment covering Gly315–Cys324 has biased composition (polar residues). Ser321 and Ser326 each carry phosphoserine. The span at Gly330–Arg342 shows a compositional bias: basic and acidic residues. Positions Pro347–Ser357 are enriched in low complexity. PbH1 repeat units follow at residues Val423–Ser444, Asn467–Leu489, Glu490–Lys512, Lys513–Gly535, Asn536–Tyr558, His559–Glu581, Asn582–Arg604, Gly605–Asp627, Glu628–Ser650, Ser651–Ser673, Ile713–Ser735, Ser736–Gln758, Ser760–Phe782, Gln783–Gly805, and Arg828–Gly850.

Component of the SCF(FBXO10) complex consisting of CUL1, SKP1 and FBXO10. Interacts with BCL2. Interacts with PRDM1. Particularly highly expressed in B-cells.

It is found in the cytoplasm. It participates in protein modification; protein ubiquitination. In terms of biological role, substrate-recognition component of the SCF (SKP1-CUL1-F-box protein)-type E3 ubiquitin ligase complex. Mediates the ubiquitination and degradation of BCL2, an antiapoptotic protein, thereby playing a role in apoptosis by controlling the stability of BCL2. Targets also the receptor for advanced glycation end products RAGE for ubiquitination and subsequent lysosomal degradation. Directly controls HGAL/GCSAM ubiquitination and degradation and thereby decreases BCR signaling. The chain is F-box only protein 10 (Fbxo10) from Mus musculus (Mouse).